The following is a 286-amino-acid chain: 4-hydroxybenzoate octaprenyltransferase (286 aa).

9 helical membrane passes run 22–42, 45–65, 90–110, 113–133, 142–162, 169–189, 212–232, 236–256, and 265–285; these read IGTLLLLWPTLWALWLASAGV, FSLLLIFTAGVFVMRSAGCVI, LTAVRALLFFLLLVLIAFVLV, LNQFTIYLSVGGLLLAAIYPF, QVVLGMAFSWAIPMAYGAVVG, WLLFLANLVWTIAYDTMYAMV, LYIALLQLGTLTLLAIIGWLE, VSYYFSLLLAAGLFIYQQWLI, and FRAFLNNNWVGMLIFAGIMLA.

Belongs to the UbiA prenyltransferase family. It depends on Mg(2+) as a cofactor.

The protein resides in the cell inner membrane. The enzyme catalyses all-trans-octaprenyl diphosphate + 4-hydroxybenzoate = 4-hydroxy-3-(all-trans-octaprenyl)benzoate + diphosphate. The protein operates within cofactor biosynthesis; ubiquinone biosynthesis. In terms of biological role, catalyzes the prenylation of para-hydroxybenzoate (PHB) with an all-trans polyprenyl group. Mediates the second step in the final reaction sequence of ubiquinone-8 (UQ-8) biosynthesis, which is the condensation of the polyisoprenoid side chain with PHB, generating the first membrane-bound Q intermediate 3-octaprenyl-4-hydroxybenzoate. This chain is 4-hydroxybenzoate octaprenyltransferase, found in Tolumonas auensis (strain DSM 9187 / NBRC 110442 / TA 4).